Reading from the N-terminus, the 103-residue chain is Small ubiquitin-related modifier 2 (103 aa).

The 78-residue stretch at 15-92 folds into the Ubiquitin-like domain; that stretch reads AHINLKVKGQ…IDAMLHQTGG (78 aa). G92 participates in a covalent cross-link: Glycyl lysine isopeptide (Gly-Lys) (interchain with K-? in acceptor proteins).

The protein belongs to the ubiquitin family. SUMO subfamily. Interacts with SAE2, SCE1, SIZ1 and MMS21. Interacts with HSFA2. Covalently attached to ABI5, FLD, GTE3, HSFA2 and ICE1.

The protein resides in the nucleus. It is found in the cytoplasm. Ubiquitin-like protein which can be covalently attached to target lysines as a monomer. Does not seem to be involved in protein degradation and may function as an antagonist of ubiquitin in the degradation process. Required for the massive protein sumoylation in the nucleus induced by heat shock and controlled by SIZ1. This chain is Small ubiquitin-related modifier 2, found in Arabidopsis thaliana (Mouse-ear cress).